Consider the following 172-residue polypeptide: Translationally-controlled tumor protein (172 aa).

Residues 1 to 172 form the TCTP domain; it reads MIIYRDLISH…FKDGLEMEKC (172 aa). Serine 46 carries the post-translational modification Phosphoserine; by PLK1. Serine 53 is subject to Phosphoserine. Serine 64 carries the phosphoserine; by PLK1 modification. Positions 70-172 are required for reduction of TSC22D1 protein stability; it reads VDIVMNHHLQ…FKDGLEMEKC (103 aa).

This sequence belongs to the TCTP family. In terms of assembly, homodimer. Interacts with STEAP3. Interacts with TSC22D1; interaction results in the destabilization of TSC22D1 protein. As to expression, found in several healthy and tumoral cells including erythrocytes, hepatocytes, macrophages, platelets, keratinocytes, erythroleukemia cells, gliomas, melanomas, hepatoblastomas, and lymphomas. It cannot be detected in kidney and renal cell carcinoma (RCC). Expressed in placenta and prostate.

The protein resides in the cytoplasm. Its function is as follows. Involved in calcium binding and microtubule stabilization. Acts as a negative regulator of TSC22D1-mediated apoptosis, via interaction with and destabilization of TSC22D1 protein. The sequence is that of Translationally-controlled tumor protein (TPT1) from Homo sapiens (Human).